The sequence spans 33 residues: Brevinin-2 (33 aa).

Cysteine 27 and cysteine 33 are joined by a disulfide.

The protein belongs to the frog skin active peptide (FSAP) family. Brevinin subfamily. As to expression, expressed by the skin glands.

The protein localises to the secreted. In terms of biological role, shows antibacterial activity against representative Gram-negative and Gram-positive bacterial species, and a very high hemolytic activity. The sequence is that of Brevinin-2 from Pelophylax porosus brevipodus (Nagoya Daruma pond frog).